A 93-amino-acid polypeptide reads, in one-letter code: Defensin-like protein 210 (93 aa).

An N-terminal signal peptide occupies residues 1-19 (MKTIILFLTLLVISSSCTS). Cystine bridges form between Cys-63–Cys-80, Cys-66–Cys-85, and Cys-70–Cys-87.

It belongs to the DEFL family.

It localises to the secreted. This chain is Defensin-like protein 210, found in Arabidopsis thaliana (Mouse-ear cress).